Reading from the N-terminus, the 273-residue chain is Methylthioribulose-1-phosphate dehydratase (273 aa).

The segment at 1–27 (MCPTCPPSAASASSENNNTDNNDHLVL) is disordered. Position 114 (C114) interacts with substrate. 2 residues coordinate Zn(2+): H132 and H134. The active-site Proton donor/acceptor is E168. H225 is a Zn(2+) binding site.

The protein belongs to the aldolase class II family. MtnB subfamily. It depends on Zn(2+) as a cofactor.

The protein localises to the cytoplasm. The enzyme catalyses 5-(methylsulfanyl)-D-ribulose 1-phosphate = 5-methylsulfanyl-2,3-dioxopentyl phosphate + H2O. The protein operates within amino-acid biosynthesis; L-methionine biosynthesis via salvage pathway; L-methionine from S-methyl-5-thio-alpha-D-ribose 1-phosphate: step 2/6. Catalyzes the dehydration of methylthioribulose-1-phosphate (MTRu-1-P) into 2,3-diketo-5-methylthiopentyl-1-phosphate (DK-MTP-1-P). This chain is Methylthioribulose-1-phosphate dehydratase, found in Sordaria macrospora (strain ATCC MYA-333 / DSM 997 / K(L3346) / K-hell).